The primary structure comprises 244 residues: Biosynthetic peptidoglycan transglycosylase (244 aa).

Residues 25–45 (LLLLLAIALLYQSWFLLHIIY) traverse the membrane as a helical segment.

It belongs to the glycosyltransferase 51 family.

It is found in the cell inner membrane. It catalyses the reaction [GlcNAc-(1-&gt;4)-Mur2Ac(oyl-L-Ala-gamma-D-Glu-L-Lys-D-Ala-D-Ala)](n)-di-trans,octa-cis-undecaprenyl diphosphate + beta-D-GlcNAc-(1-&gt;4)-Mur2Ac(oyl-L-Ala-gamma-D-Glu-L-Lys-D-Ala-D-Ala)-di-trans,octa-cis-undecaprenyl diphosphate = [GlcNAc-(1-&gt;4)-Mur2Ac(oyl-L-Ala-gamma-D-Glu-L-Lys-D-Ala-D-Ala)](n+1)-di-trans,octa-cis-undecaprenyl diphosphate + di-trans,octa-cis-undecaprenyl diphosphate + H(+). Its pathway is cell wall biogenesis; peptidoglycan biosynthesis. Peptidoglycan polymerase that catalyzes glycan chain elongation from lipid-linked precursors. This chain is Biosynthetic peptidoglycan transglycosylase, found in Nitrosomonas eutropha (strain DSM 101675 / C91 / Nm57).